Consider the following 232-residue polypeptide: LOB domain-containing protein 11 (232 aa).

The interval 1–50 is disordered; sequence MLKMEINGGVATPTASAVAKVTETTTPVNSPSPTSSPPPPPSPQQPPQPP. Over residues 34 to 50 the composition is skewed to pro residues; the sequence is TSSPPPPPSPQQPPQPP. The LOB domain occupies 54-155; it reads SPCAACKILR…AQLAKTQVEL (102 aa). Positions 181 to 218 are disordered; sequence EQGQQKMSFESSFESGDEFISSPDEESNDLGFLEDNNN. Residues 188 to 202 are compositionally biased toward low complexity; sequence SFESSFESGDEFISS.

This sequence belongs to the LOB domain-containing protein family. Expressed in young shoots, stems, leaves and flowers.

The protein is LOB domain-containing protein 11 (LBD11) of Arabidopsis thaliana (Mouse-ear cress).